Here is a 296-residue protein sequence, read N- to C-terminus: Acetylglutamate kinase (296 aa).

Residues 69 to 70 (GG), Arg-91, and Asn-193 each bind substrate.

It belongs to the acetylglutamate kinase family. ArgB subfamily.

The protein resides in the cytoplasm. It carries out the reaction N-acetyl-L-glutamate + ATP = N-acetyl-L-glutamyl 5-phosphate + ADP. It functions in the pathway amino-acid biosynthesis; L-arginine biosynthesis; N(2)-acetyl-L-ornithine from L-glutamate: step 2/4. Catalyzes the ATP-dependent phosphorylation of N-acetyl-L-glutamate. The chain is Acetylglutamate kinase from Paracidovorax citrulli (strain AAC00-1) (Acidovorax citrulli).